Reading from the N-terminus, the 1079-residue chain is Eukaryotic translation initiation factor 5B (1079 aa).

Positions 1-478 (MGKKGKKSGY…QAAPAESNVS (478 aa)) are disordered. Positions 22–38 (SGQNEYLDNTSQDSPQN) are enriched in polar residues. Basic residues predominate over residues 57-67 (SKKKKGKKNKG). Phosphoserine is present on residues S73, S77, and S82. The span at 105 to 114 (KKGKKGKKSK) shows a compositional bias: basic residues. S127 is subject to Phosphoserine. Residues 160–169 (NNNESEAAAP) show a composition bias toward low complexity. Positions 173-192 (PEVRVKTKKEKEREKKEREK) are enriched in basic and acidic residues. The span at 193 to 204 (LRKKQQQAKKKG) shows a compositional bias: basic residues. A compositionally biased stretch (polar residues) spans 207–233 (GEDTLASSEVSSEVDISTPAENDSSAK). A compositionally biased stretch (basic and acidic residues) spans 253–293 (MLEEKRAREEEEQRIREEEARIAEEEKRLAEVEEARKEEAR). Composition is skewed to low complexity over residues 321-334 (QQAL…QMLE) and 361-376 (RSGT…LESS). T364 carries the phosphothreonine modification. The segment covering 385 to 408 (EPQKDSKDDSEKVEKETEVERKEE) has biased composition (basic and acidic residues). Positions 409–431 (NEAEAEAVFDDWEAALEEPEVAE) are enriched in acidic residues. Positions 436–466 (VTEKKETDIKSDAVEHSIKDKEDSKTDKVDD) are enriched in basic and acidic residues. The 219-residue stretch at 482–700 (LRSPICCILG…LISLTQTRMS (219 aa)) folds into the tr-type G domain. Residues 491-498 (GHVDTGKT) form a G1 region. Residue 491 to 498 (GHVDTGKT) participates in GTP binding. The segment at 516 to 520 (GITQQ) is G2. Residues 555–558 (DTPG) are G3. The interval 609–612 (NKVD) is G4. Positions 677–679 (SAQ) are G5.

This sequence belongs to the TRAFAC class translation factor GTPase superfamily. Classic translation factor GTPase family. IF-2 subfamily. The cofactor is a monovalent cation.

Its subcellular location is the cytoplasm. The enzyme catalyses GTP + H2O = GDP + phosphate + H(+). Its function is as follows. Plays a role in translation initiation. Translational GTPase that catalyzes the joining of the 40S and 60S subunits to form the 80S initiation complex with the initiator methionine-tRNA in the P-site base paired to the start codon. GTP binding and hydrolysis induces conformational changes in the enzyme that renders it active for productive interactions with the ribosome. The release of the enzyme after formation of the initiation complex is a prerequisite to form elongation-competent ribosomes. The protein is Eukaryotic translation initiation factor 5B of Schizosaccharomyces pombe (strain 972 / ATCC 24843) (Fission yeast).